The primary structure comprises 415 residues: Putative competence-damage inducible protein (415 aa).

This sequence belongs to the CinA family.

The sequence is that of Putative competence-damage inducible protein from Listeria innocua serovar 6a (strain ATCC BAA-680 / CLIP 11262).